A 684-amino-acid polypeptide reads, in one-letter code: Macrolide export ATP-binding/permease protein MacB (684 aa).

An ABC transporter domain is found at Ile2–Glu243. Gly38 to Thr45 is an ATP binding site. 5 helical membrane-spanning segments follow: residues Pro248–Leu268, Thr275–Leu295, Leu563–Val583, Val615–Val635, and Ala644–Phe664.

This sequence belongs to the ABC transporter superfamily. Macrolide exporter (TC 3.A.1.122) family. Homodimer.

Its subcellular location is the cell inner membrane. Functionally, non-canonical ABC transporter that contains transmembrane domains (TMD), which form a pore in the inner membrane, and an ATP-binding domain (NBD), which is responsible for energy generation. Confers resistance against macrolides. In Rhodopirellula baltica (strain DSM 10527 / NCIMB 13988 / SH1), this protein is Macrolide export ATP-binding/permease protein MacB.